The following is a 466-amino-acid chain: 3-isopropylmalate dehydratase large subunit (466 aa).

The [4Fe-4S] cluster site is built by Cys347, Cys407, and Cys410.

This sequence belongs to the aconitase/IPM isomerase family. LeuC type 1 subfamily. In terms of assembly, heterodimer of LeuC and LeuD. The cofactor is [4Fe-4S] cluster.

It carries out the reaction (2R,3S)-3-isopropylmalate = (2S)-2-isopropylmalate. The protein operates within amino-acid biosynthesis; L-leucine biosynthesis; L-leucine from 3-methyl-2-oxobutanoate: step 2/4. Catalyzes the isomerization between 2-isopropylmalate and 3-isopropylmalate, via the formation of 2-isopropylmaleate. The sequence is that of 3-isopropylmalate dehydratase large subunit from Salmonella paratyphi A (strain ATCC 9150 / SARB42).